Here is a 396-residue protein sequence, read N- to C-terminus: MIISAASDYRAAAQRTLPPFLFHYIDGGAYAEYTLRRNVEDLSQVALRQRVLKNMSDLSLETPLFNETLSMPVALAPVGLCGMYARRGEVQAAAAADAKGIPFTLSTVSVCPIEEVAPTIKRPMWFQLYVLRDRGFMRNALERAKAAGCSTLVFTVDMPTPGARYRDAHSGMSGPNAAMRRYWQAVMHPKWAWDVGLNGRPHDLGNISAYLGKPTGLEDYIGWLANNFDPSISWKDLEWIREFWDGPMVIKGILDPEDARDAVRFGADGIVVSNHGGRQLDGVLSSARALPAIADAVKGDIAILADSGIRNGLDVVRMIALGADTVLLGRAYLYALATAGKAGVANLLDLIEKEMKVAMTLTGAKSISEISGDSLVQELGKSLPTALAPMSKGDAA.

One can recognise an FMN hydroxy acid dehydrogenase domain in the interval 1–380 (MIISAASDYR…SGDSLVQELG (380 aa)). Y24 serves as a coordination point for substrate. Positions 106 and 127 each coordinate FMN. A substrate-binding site is contributed by Y129. Residue T155 coordinates FMN. R164 is a binding site for substrate. FMN is bound at residue K251. The active-site Proton acceptor is the H275. A substrate-binding site is contributed by R278. Residue 306–330 (DSGIRNGLDVVRMIALGADTVLLGR) participates in FMN binding.

This sequence belongs to the FMN-dependent alpha-hydroxy acid dehydrogenase family. FMN serves as cofactor.

It is found in the cell inner membrane. It catalyses the reaction (S)-lactate + A = pyruvate + AH2. Functionally, catalyzes the conversion of L-lactate to pyruvate. Is coupled to the respiratory chain. The polypeptide is L-lactate dehydrogenase (Salmonella newport (strain SL254)).